Here is a 572-residue protein sequence, read N- to C-terminus: NADP-dependent malic enzyme (572 aa).

M1 is subject to N-acetylmethionine. Y102 acts as the Proton donor in catalysis. Position 155 (R155) interacts with NADP(+). The active-site Proton acceptor is the K173. 3 residues coordinate a divalent metal cation: E245, D246, and D269. Residues D269 and 301–318 (GAGE…MALE) contribute to the NADP(+) site. Position 336 is a phosphoserine (S336). N408 contributes to the NADP(+) binding site.

The protein belongs to the malic enzymes family. Homotetramer. It depends on Mg(2+) as a cofactor. The cofactor is Mn(2+). Expressed in all tissues tested including liver, placenta and white adipose tissue.

Its subcellular location is the cytoplasm. The enzyme catalyses (S)-malate + NADP(+) = pyruvate + CO2 + NADPH. It catalyses the reaction oxaloacetate + H(+) = pyruvate + CO2. Functionally, catalyzes the oxidative decarboxylation of (S)-malate in the presence of NADP(+) and divalent metal ions, and decarboxylation of oxaloacetate. In Homo sapiens (Human), this protein is NADP-dependent malic enzyme.